The primary structure comprises 287 residues: NH(3)-dependent NAD(+) synthetase (287 aa).

53-60 (GISGGQDS) provides a ligand contact to ATP. Asp-59 provides a ligand contact to Mg(2+). Arg-146 is a deamido-NAD(+) binding site. Thr-166 contributes to the ATP binding site. Glu-171 contacts Mg(2+). Positions 179 and 186 each coordinate deamido-NAD(+). ATP-binding residues include Lys-195 and Thr-217. 266 to 267 (HK) contributes to the deamido-NAD(+) binding site.

This sequence belongs to the NAD synthetase family. In terms of assembly, homodimer.

It carries out the reaction deamido-NAD(+) + NH4(+) + ATP = AMP + diphosphate + NAD(+) + H(+). It functions in the pathway cofactor biosynthesis; NAD(+) biosynthesis; NAD(+) from deamido-NAD(+) (ammonia route): step 1/1. Catalyzes the ATP-dependent amidation of deamido-NAD to form NAD. Uses ammonia as a nitrogen source. In Deinococcus radiodurans (strain ATCC 13939 / DSM 20539 / JCM 16871 / CCUG 27074 / LMG 4051 / NBRC 15346 / NCIMB 9279 / VKM B-1422 / R1), this protein is NH(3)-dependent NAD(+) synthetase.